The chain runs to 481 residues: Argininosuccinate lyase (481 aa).

This sequence belongs to the lyase 1 family. Argininosuccinate lyase subfamily.

It is found in the cytoplasm. It carries out the reaction 2-(N(omega)-L-arginino)succinate = fumarate + L-arginine. Its pathway is amino-acid biosynthesis; L-arginine biosynthesis; L-arginine from L-ornithine and carbamoyl phosphate: step 3/3. This Kineococcus radiotolerans (strain ATCC BAA-149 / DSM 14245 / SRS30216) protein is Argininosuccinate lyase.